Here is a 608-residue protein sequence, read N- to C-terminus: Protein trichome birefringence (608 aa).

A helical; Signal-anchor for type II membrane protein membrane pass occupies residues 38 to 58; the sequence is TFAYAFVITFVSFTLFFAFSP. Composition is skewed to polar residues over residues 101 to 137 and 145 to 203; these read STKP…QTPA and AKNT…TSPA. The segment at 101-236 is disordered; it reads STKPTNRSSD…TPKKQTKTVD (136 aa). The segment covering 215-227 has biased composition (low complexity); it reads TNSSSNSSTASST. The GDS motif signature appears at 328–330; the sequence is GDS. Positions 573–587 match the DCXHWCLPGXXDXWN motif motif; that stretch reads DCSHWCLPGVPDSWN.

Belongs to the PC-esterase family. TBL subfamily. As to expression, expressed in leaf vasculature, growing part of the root, expanding inflorescence stems and trichomes.

Its subcellular location is the membrane. Functionally, required during cellulose deposition. May act as a bridging protein that binds pectin and other cell wall polysaccharides. Probably involved in maintaining esterification of pectins. May be involved in the specific O-acetylation of cell wall polymers. The sequence is that of Protein trichome birefringence (TBR) from Arabidopsis thaliana (Mouse-ear cress).